Here is a 578-residue protein sequence, read N- to C-terminus: Acyl-CoA synthetase ACTT5 (578 aa).

211 to 222 (RLTTSGTTGLPK) contributes to the AMP binding site. Positions 472 to 551 (ELEAALLQAK…DEIPRSPTGK (80 aa)) are AMP-binding.

It belongs to the ATP-dependent AMP-binding enzyme family.

Its pathway is mycotoxin biosynthesis. Acyl-CoA synthetase; part of the gene clusters that mediate the biosynthesis of the host-selective toxins (HSTs) ACT-toxins responsible for brown spot of tangerine disease by the tangerine pathotype which affects tangerines and mandarins. ACT-toxins consist of three moieties, 9,10-epoxy-8-hydroxy-9-methyl-decatrienoic acid (EDA), valine and a polyketide. ACT-toxin I is toxic to both citrus and pear; toxin II the 5''-deoxy derivative of ACT-toxin I, is highly toxic to pear and slightly toxic to citrus. On cellular level, ACT-toxins affect plasma membrane of susceptible cells and cause a sudden increase in loss of K(+) after a few minutes of toxin treatment. The acyl-CoA ligase ACTT1, the hydrolase ACTT2, the enoyl-CoA hydratases ACTT3 and ACTT6, and the acyl-CoA synthetase ACTT5 are all involved in the biosynthesis of the AK-, AF- and ACT-toxin common 9,10-epoxy-8-hydroxy-9-methyl-decatrienoic acid (EDA) structural moiety. The exact role of each enzyme, and of additional enzymes identified within the AF-toxin clusters have still to be determined. On the other hand, ACTTS1 to ACTTS4 are specific to the tangerine pathotype. The function of ACTTS3 is to elongate the polyketide chain portion of ACT-toxin that is unique to this toxin. The enoyl-reductase ACTTS2 might complement the missing enoyl-reductase (ER) domain in ACTTS3 in the synthesis of the polyketide portion of ACT-toxin. The roles of the nonribosomal peptide synthetases-related proteins ACTTS1 and ACTTS4 have also still not been elucidated. The polypeptide is Acyl-CoA synthetase ACTT5 (Alternaria alternata (Alternaria rot fungus)).